A 507-amino-acid polypeptide reads, in one-letter code: ATP synthase subunit alpha, chloroplastic (507 aa).

170 to 177 (GDRQTGKT) contributes to the ATP binding site.

Belongs to the ATPase alpha/beta chains family. As to quaternary structure, F-type ATPases have 2 components, CF(1) - the catalytic core - and CF(0) - the membrane proton channel. CF(1) has five subunits: alpha(3), beta(3), gamma(1), delta(1), epsilon(1). CF(0) has four main subunits: a, b, b' and c.

It is found in the plastid. It localises to the chloroplast thylakoid membrane. The enzyme catalyses ATP + H2O + 4 H(+)(in) = ADP + phosphate + 5 H(+)(out). Its function is as follows. Produces ATP from ADP in the presence of a proton gradient across the membrane. The alpha chain is a regulatory subunit. The chain is ATP synthase subunit alpha, chloroplastic from Liriodendron tulipifera (Tuliptree).